Here is a 402-residue protein sequence, read N- to C-terminus: Acetate kinase (402 aa).

N10 is a Mg(2+) binding site. K17 serves as a coordination point for ATP. R89 provides a ligand contact to substrate. D148 serves as the catalytic Proton donor/acceptor. ATP-binding positions include 208-212 (HLGNG), 283-285 (DCR), and 334-338 (GIGEN). Position 389 (E389) interacts with Mg(2+).

The protein belongs to the acetokinase family. As to quaternary structure, homodimer. Mg(2+) is required as a cofactor. Requires Mn(2+) as cofactor.

Its subcellular location is the cytoplasm. The catalysed reaction is acetate + ATP = acetyl phosphate + ADP. It functions in the pathway metabolic intermediate biosynthesis; acetyl-CoA biosynthesis; acetyl-CoA from acetate: step 1/2. Functionally, catalyzes the formation of acetyl phosphate from acetate and ATP. Can also catalyze the reverse reaction. In Actinobacillus pleuropneumoniae serotype 5b (strain L20), this protein is Acetate kinase.